We begin with the raw amino-acid sequence, 206 residues long: dITP/XTP pyrophosphatase (206 aa).

Position 7 to 12 (7 to 12 (SSHGYK)) interacts with substrate. Catalysis depends on D70, which acts as the Proton acceptor. D70 is a binding site for Mg(2+). Residues T71, 154–157 (FGYD), K177, and 182–183 (HR) contribute to the substrate site.

Belongs to the HAM1 NTPase family. As to quaternary structure, homodimer. Requires Mg(2+) as cofactor.

It catalyses the reaction XTP + H2O = XMP + diphosphate + H(+). The catalysed reaction is dITP + H2O = dIMP + diphosphate + H(+). It carries out the reaction ITP + H2O = IMP + diphosphate + H(+). Pyrophosphatase that catalyzes the hydrolysis of nucleoside triphosphates to their monophosphate derivatives, with a high preference for the non-canonical purine nucleotides XTP (xanthosine triphosphate), dITP (deoxyinosine triphosphate) and ITP. Seems to function as a house-cleaning enzyme that removes non-canonical purine nucleotides from the nucleotide pool, thus preventing their incorporation into DNA/RNA and avoiding chromosomal lesions. This chain is dITP/XTP pyrophosphatase, found in Chlamydia pneumoniae (Chlamydophila pneumoniae).